We begin with the raw amino-acid sequence, 849 residues long: Membrane protein-large ribosomal subunit bL9 fusion protein (849 aa).

Residues 1–680 are unknown; it reads MFSKNKHNTK…TQLEGTNIKT (680 aa). Helical transmembrane passes span 11–31 and 64–84; these read FIVI…FDFQ and IIFF…IISF. The GGDEF domain maps to 214-342; that stretch reads KTLAIAMIAF…GGDQVVVNIE (129 aa). Positions 681-849 are large ribosomal subunit protein bL9; sequence VTDTLKHFLK…FLNVTERKSK (169 aa).

The protein belongs to the bacterial ribosomal protein bL9 family.

It localises to the cell membrane. Its function is as follows. Binds to the 23S rRNA. The polypeptide is Membrane protein-large ribosomal subunit bL9 fusion protein (Aster yellows witches'-broom phytoplasma (strain AYWB)).